Consider the following 131-residue polypeptide: Small ribosomal subunit protein uS8 (131 aa).

The protein belongs to the universal ribosomal protein uS8 family. Part of the 30S ribosomal subunit. Contacts proteins S5 and S12.

In terms of biological role, one of the primary rRNA binding proteins, it binds directly to 16S rRNA central domain where it helps coordinate assembly of the platform of the 30S subunit. The chain is Small ribosomal subunit protein uS8 from Finegoldia magna (strain ATCC 29328 / DSM 20472 / WAL 2508) (Peptostreptococcus magnus).